Here is a 1171-residue protein sequence, read N- to C-terminus: ATP-dependent helicase/deoxyribonuclease subunit B (1171 aa).

Positions 1–343 (MSLRFVIGRA…LVAEENYRYR (343 aa)) constitute a UvrD-like helicase ATP-binding domain. 8–15 (GRAGSGKS) contributes to the ATP binding site. The UvrD-like helicase C-terminal domain occupies 281-587 (MEQPRFHSPA…QFANIPPSLD (307 aa)). Residues cysteine 805, cysteine 1129, cysteine 1132, and cysteine 1138 each coordinate [4Fe-4S] cluster.

Belongs to the helicase family. AddB/RexB type 1 subfamily. As to quaternary structure, heterodimer of AddA and AddB. Requires Mg(2+) as cofactor. [4Fe-4S] cluster is required as a cofactor.

Functionally, the heterodimer acts as both an ATP-dependent DNA helicase and an ATP-dependent, dual-direction single-stranded exonuclease. Recognizes the chi site generating a DNA molecule suitable for the initiation of homologous recombination. The AddB subunit has 5' -&gt; 3' nuclease activity but not helicase activity. This chain is ATP-dependent helicase/deoxyribonuclease subunit B, found in Bacillus thuringiensis (strain Al Hakam).